The chain runs to 100 residues: Aspartyl/glutamyl-tRNA(Asn/Gln) amidotransferase subunit C (100 aa).

The protein belongs to the GatC family. Heterotrimer of A, B and C subunits.

The enzyme catalyses L-glutamyl-tRNA(Gln) + L-glutamine + ATP + H2O = L-glutaminyl-tRNA(Gln) + L-glutamate + ADP + phosphate + H(+). It catalyses the reaction L-aspartyl-tRNA(Asn) + L-glutamine + ATP + H2O = L-asparaginyl-tRNA(Asn) + L-glutamate + ADP + phosphate + 2 H(+). Allows the formation of correctly charged Asn-tRNA(Asn) or Gln-tRNA(Gln) through the transamidation of misacylated Asp-tRNA(Asn) or Glu-tRNA(Gln) in organisms which lack either or both of asparaginyl-tRNA or glutaminyl-tRNA synthetases. The reaction takes place in the presence of glutamine and ATP through an activated phospho-Asp-tRNA(Asn) or phospho-Glu-tRNA(Gln). The protein is Aspartyl/glutamyl-tRNA(Asn/Gln) amidotransferase subunit C of Streptococcus pneumoniae serotype 19F (strain G54).